Consider the following 275-residue polypeptide: 4-hydroxy-tetrahydrodipicolinate reductase (275 aa).

NAD(+) contacts are provided by residues 13-18 (GAAGKM), 108-110 (GTT), and 134-137 (VPNF). H164 functions as the Proton donor/acceptor in the catalytic mechanism. H165 lines the (S)-2,3,4,5-tetrahydrodipicolinate pocket. Residue K168 is the Proton donor of the active site. 174–175 (GT) is a (S)-2,3,4,5-tetrahydrodipicolinate binding site.

The protein belongs to the DapB family.

It localises to the cytoplasm. The enzyme catalyses (S)-2,3,4,5-tetrahydrodipicolinate + NAD(+) + H2O = (2S,4S)-4-hydroxy-2,3,4,5-tetrahydrodipicolinate + NADH + H(+). The catalysed reaction is (S)-2,3,4,5-tetrahydrodipicolinate + NADP(+) + H2O = (2S,4S)-4-hydroxy-2,3,4,5-tetrahydrodipicolinate + NADPH + H(+). It participates in amino-acid biosynthesis; L-lysine biosynthesis via DAP pathway; (S)-tetrahydrodipicolinate from L-aspartate: step 4/4. Its function is as follows. Catalyzes the conversion of 4-hydroxy-tetrahydrodipicolinate (HTPA) to tetrahydrodipicolinate. In Gloeothece citriformis (strain PCC 7424) (Cyanothece sp. (strain PCC 7424)), this protein is 4-hydroxy-tetrahydrodipicolinate reductase.